The chain runs to 446 residues: Deoxyguanosinetriphosphate triphosphohydrolase-like protein (446 aa).

The tract at residues 1 to 28 (MSSSVWQERRHGEDKQRRNDHRSPFQRD) is disordered. Positions 7–28 (QERRHGEDKQRRNDHRSPFQRD) are enriched in basic and acidic residues. An HD domain is found at 59 to 252 (RLTHSLEVSQ…MELADDIAYA (194 aa)).

It belongs to the dGTPase family. Type 2 subfamily.

In Shewanella sp. (strain ANA-3), this protein is Deoxyguanosinetriphosphate triphosphohydrolase-like protein.